We begin with the raw amino-acid sequence, 476 residues long: Bifunctional protein HldE (476 aa).

The interval M1 to T318 is ribokinase. Position 195–198 (N195–E198) interacts with ATP. Residue D264 is part of the active site. The interval M344–D476 is cytidylyltransferase.

The protein in the N-terminal section; belongs to the carbohydrate kinase PfkB family. This sequence in the C-terminal section; belongs to the cytidylyltransferase family. In terms of assembly, homodimer.

It catalyses the reaction D-glycero-beta-D-manno-heptose 7-phosphate + ATP = D-glycero-beta-D-manno-heptose 1,7-bisphosphate + ADP + H(+). The enzyme catalyses D-glycero-beta-D-manno-heptose 1-phosphate + ATP + H(+) = ADP-D-glycero-beta-D-manno-heptose + diphosphate. It functions in the pathway nucleotide-sugar biosynthesis; ADP-L-glycero-beta-D-manno-heptose biosynthesis; ADP-L-glycero-beta-D-manno-heptose from D-glycero-beta-D-manno-heptose 7-phosphate: step 1/4. The protein operates within nucleotide-sugar biosynthesis; ADP-L-glycero-beta-D-manno-heptose biosynthesis; ADP-L-glycero-beta-D-manno-heptose from D-glycero-beta-D-manno-heptose 7-phosphate: step 3/4. It participates in bacterial outer membrane biogenesis; LOS core biosynthesis. Catalyzes the phosphorylation of D-glycero-D-manno-heptose 7-phosphate at the C-1 position to selectively form D-glycero-beta-D-manno-heptose-1,7-bisphosphate. Its function is as follows. Catalyzes the ADP transfer from ATP to D-glycero-beta-D-manno-heptose 1-phosphate, yielding ADP-D-glycero-beta-D-manno-heptose. This Haemophilus influenzae (strain ATCC 51907 / DSM 11121 / KW20 / Rd) protein is Bifunctional protein HldE.